A 318-amino-acid polypeptide reads, in one-letter code: Endochitinase 3 (318 aa).

A signal peptide spans 1–18; the sequence is EFTIFSLLFSLLLLNASA. In terms of domain architecture, Chitin-binding type-1 spans 19–60; it reads EQCGSQAGGALCAPGLCCSKFGWCGNTNDYCGPGNCQSQCPG. 7 disulfides stabilise this stretch: cysteine 21/cysteine 36, cysteine 30/cysteine 42, cysteine 35/cysteine 49, cysteine 54/cysteine 58, cysteine 89/cysteine 152, cysteine 164/cysteine 172, and cysteine 271/cysteine 303. Glutamate 134 serves as the catalytic Proton donor. Positions 312 to 318 are cleaved as a propeptide — removed in mature form, vacuolar targeting; the sequence is GLLVDTV.

The protein belongs to the glycosyl hydrolase 19 family. Chitinase class I subfamily.

Its subcellular location is the vacuole. It carries out the reaction Random endo-hydrolysis of N-acetyl-beta-D-glucosaminide (1-&gt;4)-beta-linkages in chitin and chitodextrins.. Its function is as follows. Defense against chitin-containing fungal pathogens. This is Endochitinase 3 (CHTB3) from Solanum tuberosum (Potato).